The following is a 153-amino-acid chain: Insulin-like growth factor 1 (153 aa).

The segment at 49–77 (GPETLCGAELVDALQFVCGDRGFYFNKPT) is b. 3 disulfides stabilise this stretch: Cys54/Cys96, Cys66/Cys109, and Cys95/Cys100. Residues 78–89 (GYGSSSRRAPQT) form a c region. The segment at 90 to 110 (GIVDECCFRSCDLRRLEMYCA) is a. Positions 111–118 (PLKPAKSA) are d. A propeptide spans 119–153 (RSVRAQRHTDMPKAQKEVHLKNASRGSAGNKNYRM) (e peptide). The interval 120–153 (SVRAQRHTDMPKAQKEVHLKNASRGSAGNKNYRM) is disordered. Positions 125–138 (RHTDMPKAQKEVHL) are enriched in basic and acidic residues. Over residues 142 to 153 (SRGSAGNKNYRM) the composition is skewed to polar residues.

It belongs to the insulin family. Forms a ternary complex with IGFR1 and ITGAV:ITGB3. Forms a ternary complex with IGFR1 and ITGA6:ITGB4. Forms a ternary complex with IGFBP3 and ALS.

The protein localises to the secreted. In terms of biological role, the insulin-like growth factors, isolated from plasma, are structurally and functionally related to insulin but have a much higher growth-promoting activity. May be a physiological regulator of [1-14C]-2-deoxy-D-glucose (2DG) transport and glycogen synthesis in osteoblasts. Stimulates glucose transport in bone-derived osteoblastic (PyMS) cells and is effective at much lower concentrations than insulin, not only regarding glycogen and DNA synthesis but also with regard to enhancing glucose uptake. May play a role in synapse maturation. Ca(2+)-dependent exocytosis of IGF1 is required for sensory perception of smell in the olfactory bulb. Acts as a ligand for IGF1R. Binds to the alpha subunit of IGF1R, leading to the activation of the intrinsic tyrosine kinase activity which autophosphorylates tyrosine residues in the beta subunit thus initiating a cascade of down-stream signaling events leading to activation of the PI3K-AKT/PKB and the Ras-MAPK pathways. Binds to integrins ITGAV:ITGB3 and ITGA6:ITGB4. Its binding to integrins and subsequent ternary complex formation with integrins and IGFR1 are essential for IGF1 signaling. Induces the phosphorylation and activation of IGFR1, MAPK3/ERK1, MAPK1/ERK2 and AKT1. As part of the MAPK/ERK signaling pathway, acts as a negative regulator of apoptosis in cardiomyocytes via promotion of STUB1/CHIP-mediated ubiquitination and degradation of ICER-type isoforms of CREM. The sequence is that of Insulin-like growth factor 1 from Canis lupus familiaris (Dog).